The sequence spans 763 residues: MNQKTTLVLLALAVITIFALVCVLIAGRGGDGGEASQPHYCPSGTPSVQPWTHPGQNQLFADLSREELTAVMSFLTQKLGPDLVDAAQARPSDNCIFSVELQLPPKAAALAHLDRRSPPPAREALAIVFFGGQPQPNVTELVVGPLPQPSYMRDVTVERHGGPLPYYRRPVLLREYLDIDQMIFNRELPQAAGVLHHCCSYKQGGGNLVTMTTAPRGLQSGDRATWFGLYYNISGAGYYLHPVGLELLVDHKALDPAQWTIQKVFFQGRYYESLAQLEEQFEAGRVNVVVIPNNGTGGSWSLKSQVPPGPTPPLQFHPQGTRFSVQGSRVTSSLWTFSFGLGAFSGPRIFDIRFQGERLAYEISLQEAVAIYGGNTPAAMLTRYMDGCFGMGKFATPLTRGVDCPYLATYVDWHFLLESQAPRTLHDAFCVFEQNKGLPLRRHHSDFISQYFGGVVETVLVFRSVSTLLNYDYVWDMVFHPNGAIEVKFHATGYISSAFFFGTAQKYGNQVRENTLGTVHTHSAHYKVDLDVGGLENWVWAEDMAFVPTTVPWSPEHQIQRLQVTRKQLETEEQAAFPLGGASPRYLYLASKQSNKWGHPRGYRIQTVSFAGRPLPQNSSTERAISWGRYQLAVTQRKETEPSSSSVFNQNDPWTPTVDFADFINNETIAGKDLVAWVTAGFLHIPHAEDIPNTVTVGNGVGFFLRPYNFFDEDPSINSADSIYFQKHQDAGSCEVNSLACLPKDPACAPDLPAFSHGGFFTN.

Over 1 to 6 (MNQKTT) the chain is Cytoplasmic. A helical; Signal-anchor for type II membrane protein transmembrane segment spans residues 7–27 (LVLLALAVITIFALVCVLIAG). Topologically, residues 28–763 (RGGDGGEASQ…AFSHGGFFTN (736 aa)) are extracellular. N-linked (GlcNAc...) asparagine glycosylation is present at Asn-137. Cys-198 and Cys-199 are disulfide-bonded. Asn-232 and Asn-294 each carry an N-linked (GlcNAc...) asparagine glycan. The active-site Proton acceptor is Asp-386. Cysteines 404 and 430 form a disulfide. Tyr-471 serves as the catalytic Schiff-base intermediate with substrate; via topaquinone. At Tyr-471 the chain carries 2',4',5'-topaquinone. Residues His-520 and His-522 each coordinate Cu(2+). The Ca(2+) site is built by Asp-529, Leu-530, Asp-531, and Glu-572. Residue Asn-618 is glycosylated (N-linked (GlcNAc...) asparagine). 3 residues coordinate Ca(2+): Glu-641, Phe-663, and Asn-665. Asn-666 carries N-linked (GlcNAc...) asparagine glycosylation. The Ca(2+) site is built by Glu-667, Asp-673, and Leu-674. Residue His-684 participates in Cu(2+) binding. The cysteines at positions 734 and 741 are disulfide-linked.

This sequence belongs to the copper/topaquinone oxidase family. Homodimer; disulfide-linked. Probably forms heterodimers with AOC2. It depends on Cu(2+) as a cofactor. Requires Ca(2+) as cofactor. L-topaquinone serves as cofactor. In terms of processing, topaquinone (TPQ) is generated by copper-dependent autoxidation of a specific tyrosyl residue. N- and O-glycosylated.

The protein resides in the cell membrane. The catalysed reaction is methylamine + O2 + H2O = formaldehyde + H2O2 + NH4(+). The enzyme catalyses benzylamine + O2 + H2O = benzaldehyde + H2O2 + NH4(+). It catalyses the reaction 2-phenylethylamine + O2 + H2O = 2-phenylacetaldehyde + H2O2 + NH4(+). In terms of biological role, catalyzes the oxidative deamination of primary amines to the corresponding aldehydes with the concomitant production of hydrogen peroxide and ammonia. Has a preference for the primary monoamines methylamine and benzylamine. Could also act on 2-phenylethylamine but much less efficiently. At endothelial cells surface can also function as a cell adhesion protein that participates in lymphocyte extravasation and recirculation by mediating the binding of lymphocytes to peripheral lymph node vascular endothelial cells in an L-selectin-independent fashion. The chain is Amine oxidase [copper-containing] 3 from Bos taurus (Bovine).